We begin with the raw amino-acid sequence, 758 residues long: MSPSVASPKTLYDKVWDSHVVDLQEDGTCLLYIDRHLIHEVTSPQAFEGLRTAGRKVRHPELALATVDHNIPTDPRKDMKDIASFIHQPDSRTQVLALENNIKEFGLTYYGMNDRRQGIVHVIGPEQGFTLPGTTLVCGDSHTSTHGAFGALAFGIGTSEVEHVLATQTILQRKSKNMRIRVNGKLPEGIASKDLILHIIGVIGTAGGTGSVIEFCGEAIEGLSMEARMSMCNMSIEAGARAGMIAPDATTFEYVKNRPLAPKGDDWEQAVAYWKTLRSDENAKYDIEVEINAADVLPTVTWGTSPQDVIPINGNIPDPAHVKDNVRAASIQRSLEYMGLKPNTSIVSYPIDKVFIGSCTNSRIEDLRLAAAVVKGRKVAANVKDAMIVPGSGLVKKMAEAEGLDQIFIEAGFDWREAGCSMCLGMNPDQLKPYERCASTSNRNFEGRQGAKGRTHLVSPAMAAAAAIKGHLCNVREFFGDVSNGSPSIITNKNYDPSHDVEGDIGLSVDDATDAVTDADGIATNVAGSVSSGSAGIPKFTVVEGIAAPLPMANVDTDKIIPKQFLKTIKRTGLGQFAFYEIRYDADGKEIPDFVLNREPYRHATVLVAHDNFGCGSSREHAPWALNDFGIRVIIAPSFADIFFNNCFKNGMLPIPTPIEQVNDMMKAAENQVKFSVDLVNQTITYGDKQVKFDVEPFRKHCLVNGLDDIGLTLQKETMIDAFEAAREENFPWMNIKRSRARLSPVKSNKQSSSRNDW.

3 residues coordinate [4Fe-4S] cluster: C359, C420, and C423. S486 and S488 each carry phosphoserine.

The protein belongs to the aconitase/IPM isomerase family. The cofactor is [4Fe-4S] cluster.

The enzyme catalyses (2R,3S)-3-isopropylmalate = (2S)-2-isopropylmalate. Its pathway is amino-acid biosynthesis; L-leucine biosynthesis; L-leucine from 3-methyl-2-oxobutanoate: step 2/4. In terms of biological role, catalyzes the isomerization between 2-isopropylmalate and 3-isopropylmalate, via the formation of 2-isopropylmaleate. In Schizosaccharomyces pombe (strain 972 / ATCC 24843) (Fission yeast), this protein is 3-isopropylmalate dehydratase (leu2).